Reading from the N-terminus, the 38-residue chain is Spheniscin-1 (38 aa).

Cystine bridges form between Cys-5–Cys-33, Cys-12–Cys-27, and Cys-17–Cys-34.

As to quaternary structure, monomer. Secreted into the stomach cavity.

Its subcellular location is the secreted. Its function is as follows. Has antifungal activity and antibacterial activity against Gram-positive and Gram-negative bacteria. Involved in the process of food preservation in the stomach during the incubation fast. May also be present during infection. The protein is Spheniscin-1 of Aptenodytes patagonicus (King penguin).